A 133-amino-acid polypeptide reads, in one-letter code: Holo-[acyl-carrier-protein] synthase (133 aa).

Mg(2+) is bound by residues D8 and E57.

It belongs to the P-Pant transferase superfamily. AcpS family. The cofactor is Mg(2+).

The protein resides in the cytoplasm. The enzyme catalyses apo-[ACP] + CoA = holo-[ACP] + adenosine 3',5'-bisphosphate + H(+). Its function is as follows. Transfers the 4'-phosphopantetheine moiety from coenzyme A to a Ser of acyl-carrier-protein. The chain is Holo-[acyl-carrier-protein] synthase from Bartonella bacilliformis (strain ATCC 35685 / KC583 / Herrer 020/F12,63).